A 122-amino-acid polypeptide reads, in one-letter code: Small ribosomal subunit protein uS13 (122 aa).

A disordered region spans residues 95 to 122 (GLPVRGQRTHTNARTRKGPAKPIAGKKK).

The protein belongs to the universal ribosomal protein uS13 family. Part of the 30S ribosomal subunit. Forms a loose heterodimer with protein S19. Forms two bridges to the 50S subunit in the 70S ribosome.

Functionally, located at the top of the head of the 30S subunit, it contacts several helices of the 16S rRNA. In the 70S ribosome it contacts the 23S rRNA (bridge B1a) and protein L5 of the 50S subunit (bridge B1b), connecting the 2 subunits; these bridges are implicated in subunit movement. Contacts the tRNAs in the A and P-sites. The polypeptide is Small ribosomal subunit protein uS13 (Caulobacter sp. (strain K31)).